The sequence spans 170 residues: Cytochrome P450 monooxygenase oryQ (170 aa).

C85 lines the heme pocket.

This sequence belongs to the cytochrome P450 family. Requires heme as cofactor.

It functions in the pathway secondary metabolite biosynthesis. Its function is as follows. Cytochrome P450 monooxygenase; part of the gene cluster that mediates the biosynthesis of oryzines, natural products with an unusual maleidride backbone. The two subunits of the fungal fatty acid synthase oryfasA and oryfasB probably form octenoic acid. This fatty acid is most likely activated by the acyl-CoA ligase oryP to give octenyl-CoA before the citrate synthase-like protein oryE catalyzes condensation with oxaloacetate to form tricarboxylic acid. The next steps of the pathways are conjectural, but a favorite possible route has been proposed, beginning with decarboxylation and concomitant dehydration by the decarboxylase oryM, followed by tautomerization, which may lead to the production of a diene intermediate. Reduction of this diene intermediate could give the known metabolite piliformic acid. On the pathway to oryzine B and oryzine A, however, hydroxylation of the diene by the alpha-ketoglutarate-dependent dioxygenase oryG and lactonisation by the lactonohydrolases oryH or oryL could give oryzine B directly. Finally, enoyl reduction by the dehydrogenase oryD would then convert oryzine B into oryzine A. In Aspergillus oryzae (strain ATCC 42149 / RIB 40) (Yellow koji mold), this protein is Cytochrome P450 monooxygenase oryQ.